Reading from the N-terminus, the 278-residue chain is MAAPEEKALQVAEWLKKVFGDHPIPQYEMNSRTTEILYHLSERNRVRDRDISLVIEDLKQKASEYESEAKRLEDFLMESVNFSPANLSKSGSRFLNALVDSAIALEIKDTSLASFIPAVNDLTSDLFRTKSKSEEMKLELGKLEKNLTATLVLEKCLREDLKKAELQLSAEKAKVDSRLQNMDFLKAKAAEFRFGIKAAEEQLSARGMDASLSHRSLAALSEKLSELKEQTIPLKKKLESYLDLMPSPSLAQLKIEEAKRELDAIEAELTKKVDMMGL.

3 coiled-coil regions span residues 49 to 79 (RDIS…LMES), 128 to 178 (RTKS…VDSR), and 249 to 277 (SLAQ…DMMG).

This sequence belongs to the HAUS1 family. Component of the HAUS augmin-like complex. The complex interacts with the gamma-tubulin ring complex and this interaction is required for spindle assembly. Associates with microtubules. The interaction with microtubules is strong during mitosis, while it is weak or absent during interphase. It is unclear whether this interaction is direct or indirect. Interacts with EML3 (phosphorylated at 'Thr-882').

Its subcellular location is the cytoplasm. It is found in the cytoskeleton. The protein localises to the microtubule organizing center. It localises to the centrosome. The protein resides in the spindle. Its subcellular location is the spindle pole. Contributes to mitotic spindle assembly, maintenance of centrosome integrity and completion of cytokinesis as part of the HAUS augmin-like complex. The protein is HAUS augmin-like complex subunit 1 (Haus1) of Mus musculus (Mouse).